The primary structure comprises 201 residues: Holliday junction resolvase RecU (201 aa).

Residues threonine 87, aspartate 89, aspartate 102, and glutamine 121 each contribute to the Mg(2+) site.

Belongs to the RecU family. Mg(2+) is required as a cofactor.

Its subcellular location is the cytoplasm. The catalysed reaction is Endonucleolytic cleavage at a junction such as a reciprocal single-stranded crossover between two homologous DNA duplexes (Holliday junction).. Endonuclease that resolves Holliday junction intermediates in genetic recombination. Cleaves mobile four-strand junctions by introducing symmetrical nicks in paired strands. Promotes annealing of linear ssDNA with homologous dsDNA. Required for DNA repair, homologous recombination and chromosome segregation. The sequence is that of Holliday junction resolvase RecU from Levilactobacillus brevis (strain ATCC 367 / BCRC 12310 / CIP 105137 / JCM 1170 / LMG 11437 / NCIMB 947 / NCTC 947) (Lactobacillus brevis).